A 57-amino-acid polypeptide reads, in one-letter code: Small hydrophobic protein (57 aa).

The Virion surface segment spans residues 1 to 8 (MPAIQPPL). The chain crosses the membrane as a helical span at residues 9–29 (YPTFLLLILLSLIITLYVWII). Residues 30–57 (STITYKTAVRHAALHQRSFSRWSLDHSL) are Intravirion-facing.

The protein belongs to the rubulavirus small hydrophobic protein family. In terms of assembly, interacts with host TNFRSF1A, RIPK1 and IRAK1; these interactions interfere with host NF-kappa-B activation at the level of receptor complexes. Interacts with host protein UBQLN4.

It localises to the virion membrane. Its subcellular location is the host cell membrane. Its function is as follows. Plays a role in the inhibition of the host NF-kappa-B pathway. This inhibition occurs at the receptor level, by preventing the signaling of TNFR1 as well as IL-1R and TLR3. The chain is Small hydrophobic protein (SH) from Mumps virus genotype B (strain Miyahara vaccine) (MuV).